Reading from the N-terminus, the 199-residue chain is HTH-type transcriptional regulator BetI (199 aa).

The HTH tetR-type domain occupies 8–68 (EIRKPQLVKA…ETMREILRQL (61 aa)). The H-T-H motif DNA-binding region spans 31 to 50 (SISLISKEAGVSTGIINHYF).

The protein operates within amine and polyamine biosynthesis; betaine biosynthesis via choline pathway [regulation]. Functionally, repressor involved in the biosynthesis of the osmoprotectant glycine betaine. It represses transcription of the choline transporter BetT and the genes of BetAB involved in the synthesis of glycine betaine. The protein is HTH-type transcriptional regulator BetI of Vibrio campbellii (strain ATCC BAA-1116).